Reading from the N-terminus, the 469-residue chain is Lipase A (469 aa).

The signal sequence occupies residues 1-22 (MMFLTQLVSALFLFFLGPISYG). Positions 40–51 (PSEDPFYQPPPG) are enriched in pro residues. Residues 40–59 (PSEDPFYQPPPGYEETEPGT) are disordered. An N-linked (GlcNAc...) asparagine glycan is attached at asparagine 111. A disulfide bridge connects residues cysteine 129 and cysteine 304. Residues serine 217, aspartate 361, and histidine 393 each act as charge relay system in the active site. A disulfide bridge connects residues cysteine 377 and cysteine 421.

The protein belongs to the AB hydrolase superfamily. Lipase family. Class Lip subfamily. In terms of assembly, monomer.

The protein localises to the secreted. It catalyses the reaction a triacylglycerol + H2O = a diacylglycerol + a fatty acid + H(+). Hydrolyzes triglycerides, with a preference for substrates with short-chain lengths (C4 to C8). This is Lipase A from Arthroderma benhamiae (strain ATCC MYA-4681 / CBS 112371) (Trichophyton mentagrophytes).